Here is a 500-residue protein sequence, read N- to C-terminus: UDP-N-acetylmuramoyl-L-alanyl-D-glutamate--2,6-diaminopimelate ligase (500 aa).

Residue Ser38 coordinates UDP-N-acetyl-alpha-D-muramoyl-L-alanyl-D-glutamate. 118–124 (GTNGKTS) contacts ATP. Residues 160-161 (TT), Ser187, and Arg195 each bind UDP-N-acetyl-alpha-D-muramoyl-L-alanyl-D-glutamate. The residue at position 227 (Lys227) is an N6-carboxylysine. Residues Arg395, 419–422 (DNPR), Gly471, and Glu475 contribute to the meso-2,6-diaminopimelate site. Positions 419–422 (DNPR) match the Meso-diaminopimelate recognition motif motif.

Belongs to the MurCDEF family. MurE subfamily. It depends on Mg(2+) as a cofactor. Post-translationally, carboxylation is probably crucial for Mg(2+) binding and, consequently, for the gamma-phosphate positioning of ATP.

It localises to the cytoplasm. It carries out the reaction UDP-N-acetyl-alpha-D-muramoyl-L-alanyl-D-glutamate + meso-2,6-diaminopimelate + ATP = UDP-N-acetyl-alpha-D-muramoyl-L-alanyl-gamma-D-glutamyl-meso-2,6-diaminopimelate + ADP + phosphate + H(+). It functions in the pathway cell wall biogenesis; peptidoglycan biosynthesis. Functionally, catalyzes the addition of meso-diaminopimelic acid to the nucleotide precursor UDP-N-acetylmuramoyl-L-alanyl-D-glutamate (UMAG) in the biosynthesis of bacterial cell-wall peptidoglycan. This Leptospira borgpetersenii serovar Hardjo-bovis (strain L550) protein is UDP-N-acetylmuramoyl-L-alanyl-D-glutamate--2,6-diaminopimelate ligase.